The primary structure comprises 234 residues: Triosephosphate isomerase (234 aa).

Position 8–10 (Asn-8–Lys-10) interacts with substrate. Catalysis depends on His-90, which acts as the Electrophile. The active-site Proton acceptor is the Glu-159. Substrate contacts are provided by residues Gly-165, Ser-197, and Gly-218–Ser-219.

As to quaternary structure, homodimer.

The protein localises to the cytoplasm. It carries out the reaction D-glyceraldehyde 3-phosphate = dihydroxyacetone phosphate. The protein operates within carbohydrate biosynthesis; gluconeogenesis. It participates in carbohydrate degradation; glycolysis; D-glyceraldehyde 3-phosphate from glycerone phosphate: step 1/1. Functionally, involved in the gluconeogenesis. Catalyzes stereospecifically the conversion of dihydroxyacetone phosphate (DHAP) to D-glyceraldehyde-3-phosphate (G3P). This chain is Triosephosphate isomerase, found in Helicobacter pylori (strain ATCC 700392 / 26695) (Campylobacter pylori).